The following is a 479-amino-acid chain: mRNA export factor ICP27 homolog (479 aa).

Positions 1-15 (MVPSQRLSRTSSISS) are enriched in low complexity. 2 disordered regions span residues 1 to 78 (MVPS…SSVV) and 92 to 210 (KWDL…NKPW). Residues 35 to 44 (TDCDMDPMEG) are compositionally biased toward acidic residues. Residues 132–142 (EVHGCTDESYG) are compositionally biased toward basic and acidic residues. Zn(2+) is bound by residues Cys-354, His-445, Cys-449, and Cys-454. The CHC2-type zinc-finger motif lies at 354-454 (CFLPNTRDYN…HTRDCRSASC (101 aa)).

This sequence belongs to the HHV-1 ICP27 protein family. As to quaternary structure, interacts with host XPO1 and with the XPO1 export pathway components small GTPase RAN and nucleoporin NUP214. Interacts with host SPEN, OTT1 and OTT3. Interacts with host SRSF1, SRSF3, SRSF7 and SRPK1. Interacts with host DHX9; this interaction may have an inhibitory effect on virion production. Interacts (via N-terminus) with host NXF1; this interaction plays a role in mRNA export. In terms of processing, phosphorylated by cellular protein kinase CK2.

It localises to the host nucleus. The protein resides in the host cytoplasm. Its function is as follows. Promotes the nuclear export of a subset of early and late viral mRNAs by interacting with mRNAs and cellular export proteins. Additionally may prevent the establishment of cellular antiviral state, by acting as an alternative splicing factor for cellular RNAs such as STAT1, resulting in a STAT1 mRNA incapable of producing the STAT1alpha isoform. This is mRNA export factor ICP27 homolog from Homo sapiens (Human).